The chain runs to 251 residues: Aliphatic sulfonates import ATP-binding protein SsuB (251 aa).

The ABC transporter domain occupies 3 to 231 (VSINEVSKYF…PRSKNSESFQ (229 aa)). 39 to 46 (GPSGCGKS) contributes to the ATP binding site.

Belongs to the ABC transporter superfamily. Aliphatic sulfonates importer (TC 3.A.1.17.2) family. In terms of assembly, the complex is composed of two ATP-binding proteins (SsuB), two transmembrane proteins (SsuC) and a solute-binding protein (SsuA).

The protein resides in the cell membrane. It catalyses the reaction ATP + H2O + aliphatic sulfonate-[sulfonate-binding protein]Side 1 = ADP + phosphate + aliphatic sulfonateSide 2 + [sulfonate-binding protein]Side 1.. In terms of biological role, part of the ABC transporter complex SsuABC involved in aliphatic sulfonates import. Responsible for energy coupling to the transport system. This Bacillus cereus (strain ZK / E33L) protein is Aliphatic sulfonates import ATP-binding protein SsuB.